A 461-amino-acid chain; its full sequence is Acetylcholine receptor subunit alpha (461 aa).

The first 24 residues, Met-1 to Gly-24, serve as a signal peptide directing secretion. The Extracellular segment spans residues Ser-25–Ile-234. Intrachain disulfides connect Cys-152/Cys-166 and Cys-216/Cys-217. A glycan (N-linked (GlcNAc...) asparagine) is linked at Asn-165. A run of 3 helical transmembrane segments spans residues Pro-235–Leu-259, Met-267–Val-285, and Tyr-301–Ile-320. Residues Asn-321–His-432 lie on the Cytoplasmic side of the membrane. The chain crosses the membrane as a helical span at residues Ile-433–Ala-451.

Belongs to the ligand-gated ion channel (TC 1.A.9) family. Acetylcholine receptor (TC 1.A.9.1) subfamily. Alpha-1/CHRNA1 sub-subfamily. Pentamer of two alpha chains, and one each of the beta, delta, and gamma chains.

It is found in the postsynaptic cell membrane. The protein localises to the cell membrane. It carries out the reaction K(+)(in) = K(+)(out). It catalyses the reaction Na(+)(in) = Na(+)(out). Its function is as follows. Upon acetylcholine binding, the AChR responds by an extensive change in conformation that affects all subunits and leads to opening of an ion-conducting channel across the plasma membrane. The polypeptide is Acetylcholine receptor subunit alpha (CHRNA1) (Torpedo marmorata (Marbled electric ray)).